Here is a 608-residue protein sequence, read N- to C-terminus: Formate hydrogenlyase subunit 3 (608 aa).

12 helical membrane passes run 10-26 (GVAW…LFSF), 44-67 (LYTA…LSLV), 76-93 (LNAI…FVSL), 116-140 (AAAV…MALC), 153-173 (LWFA…WLLW), 197-218 (IWLL…HGWV), 229-251 (AAAL…LSLL), 258-280 (WWGI…YALV), 296-312 (IGII…GIAL), 416-440 (LAVG…VTFL), 453-476 (CAPL…GVAA), and 502-521 (MITL…MAIC).

Belongs to the complex I subunit 4 family. FHL comprises of a formate dehydrogenase, unidentified electron carriers and a hydrogenase (isoenzyme 3). In this non-energy conserving pathway molecular hydrogen and carbodioxide from formate are released.

The protein resides in the cell inner membrane. The polypeptide is Formate hydrogenlyase subunit 3 (hycC) (Escherichia coli (strain K12)).